A 355-amino-acid polypeptide reads, in one-letter code: UDP-N-acetylglucosamine--N-acetylmuramyl-(pentapeptide) pyrophosphoryl-undecaprenol N-acetylglucosamine transferase (355 aa).

UDP-N-acetyl-alpha-D-glucosamine is bound by residues 15–17, asparagine 127, arginine 163, serine 191, isoleucine 244, 263–268, and glutamine 288; these read TGG and ALTVSE.

The protein belongs to the glycosyltransferase 28 family. MurG subfamily.

The protein resides in the cell inner membrane. It catalyses the reaction di-trans,octa-cis-undecaprenyl diphospho-N-acetyl-alpha-D-muramoyl-L-alanyl-D-glutamyl-meso-2,6-diaminopimeloyl-D-alanyl-D-alanine + UDP-N-acetyl-alpha-D-glucosamine = di-trans,octa-cis-undecaprenyl diphospho-[N-acetyl-alpha-D-glucosaminyl-(1-&gt;4)]-N-acetyl-alpha-D-muramoyl-L-alanyl-D-glutamyl-meso-2,6-diaminopimeloyl-D-alanyl-D-alanine + UDP + H(+). The protein operates within cell wall biogenesis; peptidoglycan biosynthesis. Cell wall formation. Catalyzes the transfer of a GlcNAc subunit on undecaprenyl-pyrophosphoryl-MurNAc-pentapeptide (lipid intermediate I) to form undecaprenyl-pyrophosphoryl-MurNAc-(pentapeptide)GlcNAc (lipid intermediate II). The sequence is that of UDP-N-acetylglucosamine--N-acetylmuramyl-(pentapeptide) pyrophosphoryl-undecaprenol N-acetylglucosamine transferase from Escherichia coli O127:H6 (strain E2348/69 / EPEC).